A 206-amino-acid polypeptide reads, in one-letter code: Protein-methionine-sulfoxide reductase heme-binding subunit MsrQ (206 aa).

6 consecutive transmembrane segments (helical) span residues I14–A34, F45–T65, M82–D102, P118–T138, W149–W169, and Q179–W199.

The protein belongs to the MsrQ family. In terms of assembly, heterodimer of a catalytic subunit (MsrP) and a heme-binding subunit (MsrQ). FMN serves as cofactor. Heme b is required as a cofactor.

Its subcellular location is the cell inner membrane. Part of the MsrPQ system that repairs oxidized periplasmic proteins containing methionine sulfoxide residues (Met-O), using respiratory chain electrons. Thus protects these proteins from oxidative-stress damage caused by reactive species of oxygen and chlorine generated by the host defense mechanisms. MsrPQ is essential for the maintenance of envelope integrity under bleach stress, rescuing a wide series of structurally unrelated periplasmic proteins from methionine oxidation. MsrQ provides electrons for reduction to the reductase catalytic subunit MsrP, using the quinone pool of the respiratory chain. In Bordetella bronchiseptica (strain ATCC BAA-588 / NCTC 13252 / RB50) (Alcaligenes bronchisepticus), this protein is Protein-methionine-sulfoxide reductase heme-binding subunit MsrQ.